Here is a 311-residue protein sequence, read N- to C-terminus: Malate dehydrogenase (311 aa).

NAD(+) is bound by residues 7 to 13 (GAAGGIG) and D34. Residues R81 and R87 each contribute to the substrate site. NAD(+) contacts are provided by residues N94 and 117–119 (ITN). Substrate is bound by residues N119 and R153. H177 serves as the catalytic Proton acceptor. M227 provides a ligand contact to NAD(+).

This sequence belongs to the LDH/MDH superfamily. MDH type 1 family. As to quaternary structure, homodimer.

The enzyme catalyses (S)-malate + NAD(+) = oxaloacetate + NADH + H(+). In terms of biological role, catalyzes the reversible oxidation of malate to oxaloacetate. The protein is Malate dehydrogenase of Shewanella pealeana (strain ATCC 700345 / ANG-SQ1).